The chain runs to 118 residues: Myotrophin (118 aa).

3 ANK repeats span residues 1 to 30 (MGDK…DVNR), 34 to 65 (GGRK…NAAD), and 67 to 98 (HGIT…TVKG).

It belongs to the myotrophin family.

The protein localises to the cytoplasm. It is found in the nucleus. It localises to the perinuclear region. Functionally, regulates NF-kappa-B transcription factor activity. Promotes growth of cardiomyocytes, but not cardiomyocyte proliferation. Promotes cardiac muscle hypertrophy. Plays a role in the regulation of the growth of actin filaments. Inhibits the activity of the F-actin-capping protein complex. The sequence is that of Myotrophin (mtpn) from Xenopus tropicalis (Western clawed frog).